We begin with the raw amino-acid sequence, 524 residues long: Serine/threonine-protein kinase PAK 2 (524 aa).

Positions 1-81 (MSDNGELEDK…PEISPPSDFE (81 aa)) are disordered. An N-acetylserine modification is found at S2. Residues S2, S20, S55, and S58 each carry the phosphoserine modification. T60 carries the post-translational modification Phosphothreonine. K62 is subject to N6-acetyllysine. Residue S64 is modified to Phosphoserine. Positions 67–81 (KEKERPEISPPSDFE) are enriched in basic and acidic residues. Residues 69–112 (KERPEISPPSDFEHTIHVGFDAVTGEFTGMPEQWARLLQTSNIT) are GTPase-binding. The autoregulatory region stretch occupies residues 69–137 (KERPEISPPS…KFYDSNTVKQ (69 aa)). A CRIB domain is found at 74-87 (ISPPSDFEHTIHVG). Residue K128 is modified to N6-acetyllysine. T134 is subject to Phosphothreonine. The residue at position 139 (Y139) is a Phosphotyrosine. S141 is modified (phosphoserine). At T143 the chain carries Phosphothreonine. Disordered stretches follow at residues 143 to 164 (TPPE…GTEA) and 169 to 188 (TEEE…PRPD). S152 carries the post-translational modification Phosphoserine. T154 and T169 each carry phosphothreonine. A compositionally biased stretch (acidic residues) spans 169-178 (TEEEDDDEET). Residue S197 is modified to Phosphoserine. G213 carries the N-myristoyl glycine; in form PAK-2p34 lipid modification. The Nuclear localization signal motif lies at 245-251 (PKKKYTR). The Protein kinase domain occupies 249–499 (YTRYEKIGQG…SAKELLQHPF (251 aa)). ATP is bound by residues 255-263 (IGQGASGTV) and K278. R367 serves as the catalytic Proton acceptor. T402 is subject to Phosphothreonine; by autocatalysis.

It belongs to the protein kinase superfamily. STE Ser/Thr protein kinase family. STE20 subfamily. Interacts tightly with GTP-bound but not GDP-bound CDC42/p21 and RAC1. Interacts with SH3MD4. Interacts with SCRIB. Interacts with ARHGEF7 and GIT1. PAK-2p34 interacts with ARHGAP10. In terms of assembly, (Microbial infection) Interacts with and activated by HIV-1 Nef. Post-translationally, full-length PAK2 is autophosphorylated when activated by CDC42/p21. Following cleavage, both peptides, PAK-2p27 and PAK-2p34, become highly autophosphorylated, with PAK-2p27 being phosphorylated on serine and PAK-2p34 on threonine residues, respectively. Autophosphorylation of PAK-2p27 can occur in the absence of any effectors and is dependent on phosphorylation of Thr-402, because PAK-2p27 is acting as an exogenous substrate. In terms of processing, during apoptosis proteolytically cleaved by caspase-3 or caspase-3-like proteases to yield active PAK-2p34. Ubiquitinated, leading to its proteasomal degradation. Post-translationally, PAK-2p34 is myristoylated. As to expression, ubiquitously expressed. Higher levels seen in skeletal muscle, ovary, thymus and spleen.

It localises to the cytoplasm. The protein localises to the nucleus. The protein resides in the perinuclear region. Its subcellular location is the membrane. It catalyses the reaction L-seryl-[protein] + ATP = O-phospho-L-seryl-[protein] + ADP + H(+). The catalysed reaction is L-threonyl-[protein] + ATP = O-phospho-L-threonyl-[protein] + ADP + H(+). Its activity is regulated as follows. Activated by binding small G proteins. Binding of GTP-bound CDC42 or RAC1 to the autoregulatory region releases monomers from the autoinhibited dimer, enables phosphorylation of Thr-402 and allows the kinase domain to adopt an active structure. Following caspase cleavage, autophosphorylated PAK-2p34 is constitutively active. Its function is as follows. Serine/threonine protein kinase that plays a role in a variety of different signaling pathways including cytoskeleton regulation, cell motility, cell cycle progression, apoptosis or proliferation. Acts as a downstream effector of the small GTPases CDC42 and RAC1. Activation by the binding of active CDC42 and RAC1 results in a conformational change and a subsequent autophosphorylation on several serine and/or threonine residues. Full-length PAK2 stimulates cell survival and cell growth. Phosphorylates MAPK4 and MAPK6 and activates the downstream target MAPKAPK5, a regulator of F-actin polymerization and cell migration. Phosphorylates JUN and plays an important role in EGF-induced cell proliferation. Phosphorylates many other substrates including histone H4 to promote assembly of H3.3 and H4 into nucleosomes, BAD, ribosomal protein S6, or MBP. Phosphorylates CASP7, thereby preventing its activity. Additionally, associates with ARHGEF7 and GIT1 to perform kinase-independent functions such as spindle orientation control during mitosis. On the other hand, apoptotic stimuli such as DNA damage lead to caspase-mediated cleavage of PAK2, generating PAK-2p34, an active p34 fragment that translocates to the nucleus and promotes cellular apoptosis involving the JNK signaling pathway. Caspase-activated PAK2 phosphorylates MKNK1 and reduces cellular translation. This is Serine/threonine-protein kinase PAK 2 (PAK2) from Homo sapiens (Human).